A 673-amino-acid polypeptide reads, in one-letter code: Forkhead box protein O3 (673 aa).

The interval 1 to 153 (MAEAPASPAP…SGQPRKCSSR (153 aa)) is disordered. S30 is subject to Phosphoserine; by AMPK. T32 bears the Phosphothreonine; by PKB/AKT1 mark. K46 carries the post-translational modification N6-methyllysine. Acidic residues predominate over residues 57–68 (IPEEEDDEDDED). The span at 79–89 (IGGGGGSGTLG) shows a compositional bias: gly residues. Residues 80–108 (GGGGGSGTLGSGLLLEDSARVLAPGGQDP) form a required for mitochondrial import region. At K149 the chain carries N6-methyllysine. The fork-head DNA-binding region spans 157 to 251 (WGNLSYADLI…KSGKAPRRRA (95 aa)). T179 is modified (phosphothreonine; by AMPK). The residue at position 209 (S209) is a Phosphoserine; by STK4/MST1. The residue at position 215 (S215) is a Phosphoserine; by MAPKAPK5. Position 230 is an N6-methyllysine (K230). Residues 231–302 (SSWWIINPDG…GSPTSRSSDE (72 aa)) are disordered. The residue at position 242 (K242) is an N6-acetyllysine. Residues 242–259 (KSGKAPRRRAVSMDNSNK) carry the Nuclear localization signal motif. Position 253 is a phosphoserine; by PKB/AKT1 and MAPKAPK5 (S253). Residues 261-272 (TKSRGRAAKKKA) are compositionally biased toward basic residues. K262 and K271 each carry N6-methyllysine. 2 positions are modified to phosphoserine: S280 and S284. Positions 283–298 (DSPSQLSKWPGSPTSR) are enriched in polar residues. K290 carries the post-translational modification N6-methyllysine. At S294 the chain carries Phosphoserine. The residue at position 299 (S299) is a Phosphoserine; by CaMK2A. Residues 300–673 (SDELDAWTDF…QASSQSWVPG (374 aa)) form a mediates interaction with CHUK/IKKA and IKBKB/IKKB region. Phosphoserine is present on S311. S315 is subject to Phosphoserine; by SGK1. Phosphoserine; by AMPK is present on residues S399 and S413. K419 carries the N6-methyllysine modification. At S421 the chain carries Phosphoserine. Residues 536-587 (HQHQTQGALGGSRALSNSVSNMGLSESSSLGSAKHQQQSPVSQSMQTLSDSL) form a disordered region. Polar residues predominate over residues 549–582 (ALSNSVSNMGLSESSSLGSAKHQQQSPVSQSMQT). S551 is modified (phosphoserine; by MAPKAPK5). S555 carries the post-translational modification Phosphoserine; by AMPK and MAPKAPK5. S588 and S626 each carry phosphoserine; by AMPK. S644 bears the Phosphoserine; by IKKB mark.

In terms of assembly, upon metabolic stress, forms a complex composed of FOXO3, SIRT3 and mitochondrial RNA polymerase POLRMT; the complex is recruited to mtDNA in a SIRT3-dependent manner. Also forms a complex composed of FOXO3, SIRT3, TFAM and POLRMT. Interacts with SIRT2; the interaction occurs independently of SIRT2 deacetylase activity. Interacts with YWHAB/14-3-3-beta and YWHAZ/14-3-3-zeta, which are required for cytosolic sequestration. Upon oxidative stress, interacts with STK4/MST1, which disrupts interaction with YWHAB/14-3-3-beta and leads to nuclear translocation. Interacts with PIM1. Interacts with DDIT3/CHOP. Interacts (deacetylated form) with SKP2. Interacts with CHUK and IKBKB. Interacts with CAMK2A, CAMK2B and calcineurin A. Interacts with NUPR1; this interaction represses FOXO3 transactivation. In the presence of survival factors such as IGF1, phosphorylated on Thr-32 and Ser-253 by AKT1/PKB. This phosphorylated form then interacts with 14-3-3 proteins and is retained in the cytoplasm. Survival factor withdrawal induces dephosphorylation and promotes translocation to the nucleus where the dephosphorylated protein induces transcription of target genes and triggers apoptosis. Although AKT1/PKB doesn't appear to phosphorylate Ser-315 directly, it may activate other kinases that trigger phosphorylation at this residue. Phosphorylated by STK4/MST1 on Ser-209 upon oxidative stress, which leads to dissociation from YWHAB/14-3-3-beta and nuclear translocation. Phosphorylated by PIM1. Phosphorylation by AMPK leads to the activation of transcriptional activity without affecting subcellular localization. In response to metabolic stress, phosphorylated by AMPK on Ser-30 which mediates FOXO3 mitochondrial translocation. Phosphorylation by MAPKAPK5 promotes nuclear localization and DNA-binding, leading to induction of miR-34b and miR-34c expression, 2 post-transcriptional regulators of MYC that bind to the 3'UTR of MYC transcript and prevent its translation. Phosphorylated by CHUK/IKKA and IKBKB/IKKB. TNF-induced inactivation of FOXO3 requires its phosphorylation at Ser-644 by IKBKB/IKKB which promotes FOXO3 retention in the cytoplasm, polyubiquitination and ubiquitin-mediated proteasomal degradation. May be dephosphorylated by calcineurin A on Ser-299 which abolishes FOXO3 transcriptional activity. In cancer cells, ERK mediated-phosphorylation of Ser-12 is required for mitochondrial translocation of FOXO3 in response to metabolic stress or chemotherapeutic agents. Phosphorylation at Ser-253 promotes its degradation by the proteasome. Dephosphorylation at Ser-253 by protein phosphatase 2A (PPP2CA) promotes its stabilization; interaction with PPP2CA is enhanced by AMBRA1. In terms of processing, deacetylation by SIRT1 or SIRT2 stimulates interaction of FOXO3 with SKP2 and facilitates SCF(SKP2)-mediated FOXO3 ubiquitination and proteasomal degradation. Deacetylation by SIRT2 stimulates FOXO3-mediated transcriptional activity in response to oxidative stress. Deacetylated by SIRT3. Deacetylation by SIRT3 stimulates FOXO3-mediated mtDNA transcriptional activity in response to metabolic stress. Post-translationally, heavily methylated by SET9 which decreases stability, while moderately increasing transcriptional activity. The main methylation site is Lys-271. Methylation doesn't affect subcellular location. Polyubiquitinated. Ubiquitinated by a SCF complex containing SKP2, leading to proteasomal degradation. In terms of processing, the N-terminus is cleaved following import into the mitochondrion. Ubiquitous.

It localises to the cytoplasm. It is found in the cytosol. The protein resides in the nucleus. The protein localises to the mitochondrion matrix. Its subcellular location is the mitochondrion outer membrane. In terms of biological role, transcriptional activator that recognizes and binds to the DNA sequence 5'-[AG]TAAA[TC]A-3' and regulates different processes, such as apoptosis and autophagy. Acts as a positive regulator of autophagy in skeletal muscle: in starved cells, enters the nucleus following dephosphorylation and binds the promoters of autophagy genes, such as GABARAP1L, MAP1LC3B and ATG12, thereby activating their expression, resulting in proteolysis of skeletal muscle proteins. Triggers apoptosis in the absence of survival factors, including neuronal cell death upon oxidative stress. Participates in post-transcriptional regulation of MYC: following phosphorylation by MAPKAPK5, promotes induction of miR-34b and miR-34c expression, 2 post-transcriptional regulators of MYC that bind to the 3'UTR of MYC transcript and prevent its translation. In response to metabolic stress, translocates into the mitochondria where it promotes mtDNA transcription. In response to metabolic stress, translocates into the mitochondria where it promotes mtDNA transcription. Also acts as a key regulator of chondrogenic commitment of skeletal progenitor cells in response to lipid availability: when lipids levels are low, translocates to the nucleus and promotes expression of SOX9, which induces chondrogenic commitment and suppresses fatty acid oxidation. Also acts as a key regulator of regulatory T-cells (Treg) differentiation by activating expression of FOXP3. The protein is Forkhead box protein O3 of Homo sapiens (Human).